We begin with the raw amino-acid sequence, 341 residues long: tRNA N6-adenosine threonylcarbamoyltransferase (341 aa).

His-110 and His-114 together coordinate Fe cation. Residues 133-137, Asp-166, Gly-179, and Asn-276 each bind substrate; that span reads LVSGG. Asp-304 serves as a coordination point for Fe cation.

The protein belongs to the KAE1 / TsaD family. Fe(2+) serves as cofactor.

The protein localises to the cytoplasm. The catalysed reaction is L-threonylcarbamoyladenylate + adenosine(37) in tRNA = N(6)-L-threonylcarbamoyladenosine(37) in tRNA + AMP + H(+). Required for the formation of a threonylcarbamoyl group on adenosine at position 37 (t(6)A37) in tRNAs that read codons beginning with adenine. Is involved in the transfer of the threonylcarbamoyl moiety of threonylcarbamoyl-AMP (TC-AMP) to the N6 group of A37, together with TsaE and TsaB. TsaD likely plays a direct catalytic role in this reaction. This is tRNA N6-adenosine threonylcarbamoyltransferase from Saccharophagus degradans (strain 2-40 / ATCC 43961 / DSM 17024).